A 125-amino-acid chain; its full sequence is Fluoride-specific ion channel FluC (125 aa).

4 consecutive transmembrane segments (helical) span residues Ala-6–Val-26, Trp-36–Ala-56, Phe-68–Ala-88, and Trp-97–Leu-117. Gly-76 and Thr-79 together coordinate Na(+).

This sequence belongs to the fluoride channel Fluc/FEX (TC 1.A.43) family.

The protein localises to the cell inner membrane. The enzyme catalyses fluoride(in) = fluoride(out). Its activity is regulated as follows. Na(+) is not transported, but it plays an essential structural role and its presence is essential for fluoride channel function. Functionally, fluoride-specific ion channel. Important for reducing fluoride concentration in the cell, thus reducing its toxicity. This is Fluoride-specific ion channel FluC from Nitrosococcus oceani (strain ATCC 19707 / BCRC 17464 / JCM 30415 / NCIMB 11848 / C-107).